Reading from the N-terminus, the 1029-residue chain is DNA repair protein RAD5A (1029 aa).

Residues 83 to 104 form a disordered region; sequence SVGANHRVEEENESVNGGGEES. The region spanning 406–622 is the Helicase ATP-binding domain; that stretch reads PSTLQMARGG…YSLLRFLRIE (217 aa). Position 419–426 (419–426) interacts with ATP; it reads DAMGLGKT. The DEAH box motif lies at 573–576; that stretch reads DEAH. The RING-type zinc finger occupies 794–834; that stretch reads CPICLEALEDAVLTPCAHRLCRECLLASWRNSTSGLCPVCR. The Helicase C-terminal domain occupies 864–1029; it reads KITALLEELE…RIEELKMLFT (166 aa).

This sequence belongs to the SNF2/RAD54 helicase family. RAD16 subfamily.

The protein resides in the nucleus. Functions in error-free postreplication DNA repair or DNA-damage tolerance (DTT) pathway. Required for homologous recombination (HR) induced by DNA double-strand break (DSB) in somatic cells. Required for damage-induced DNA repair, independently of MUS81 and RECQL4A. Plays a role in synthesis-dependent strand annealing (SDSA) but not in single-strand annealing (SSA). Possesses double-stranded DNA-dependent ATPase activity. Is able to regress replication forks with preference for forks with a leading strand gap. Is able to catalyze branch migration of Holliday junctions and is unaffected by protein blockades. The chain is DNA repair protein RAD5A from Arabidopsis thaliana (Mouse-ear cress).